The chain runs to 20 residues: Beta-fibrinogenase jerdofibrase (20 aa).

In terms of domain architecture, Peptidase S1 spans 1-20; the sequence is VIGGDECNINEHPFLVLVYY.

This sequence belongs to the peptidase S1 family. Snake venom subfamily. Monomer. As to expression, expressed by the venom gland.

It is found in the secreted. With respect to regulation, inhibited by PMSF and soybean trypsin inhibitor. Partially inhibited by DTT and cysteine. Not affected by EDTA. Functionally, fibrin(ogen)olytic serine protease degrades Bbeta-chain of human fibrinogen (FGB) and shows a lower activity on Aa-chain (FGA). Also degrades fibrin directly. Releases fibrinopeptide B and a small amount of fibrinopeptide A. Has also be shown to catalyze the hydrolysis of some chromogenic substrates such as S2238, S2160, S2302 and S2251. This is Beta-fibrinogenase jerdofibrase from Protobothrops jerdonii (Jerdon's pitviper).